The primary structure comprises 85 residues: Beta-insect depressant toxin Lqh-dprIT3c (85 aa).

Positions 1–21 are cleaved as a signal peptide; the sequence is MKLLLLLTISASMLIEGLVNA. Residues 22 to 82 enclose the LCN-type CS-alpha/beta domain; it reads DGYIRGGDGC…EWDYETNTCG (61 aa). 4 disulfides stabilise this stretch: Cys-31-Cys-81, Cys-35-Cys-56, Cys-42-Cys-63, and Cys-46-Cys-65. Gly-82 is modified (glycine amide).

This sequence belongs to the long (4 C-C) scorpion toxin superfamily. Sodium channel inhibitor family. Beta subfamily. As to expression, expressed by the venom gland.

Its subcellular location is the secreted. Functionally, depressant insect beta-toxins cause a transient contraction paralysis followed by a slow flaccid paralysis. They bind voltage-independently at site-4 of sodium channels (Nav) and block action potentials, primarily by depolarizing the axonal membrane and suppressing the sodium current. This depressant toxin is active only on insects. It is found in a relatively small amount in the venom, and its activity on insects is 10-fold higher compared to other known depressant toxins. The polypeptide is Beta-insect depressant toxin Lqh-dprIT3c (Leiurus hebraeus (Hebrew deathstalker scorpion)).